The sequence spans 448 residues: Methionine aminopeptidase 2 (448 aa).

The span at 1-17 (MPATAEAADAATQATDA) shows a compositional bias: low complexity. Residues 1–87 (MPATAEAADA…QTEPPSIGLT (87 aa)) are disordered. A compositionally biased stretch (basic and acidic residues) spans 21-34 (KLEENKLPEGQERG). Over residues 35–46 (PEEEEDDDDDET) the composition is skewed to acidic residues. Positions 55-71 (KKKKKKKSGAKKKKSKT) are enriched in basic residues. Substrate is bound at residue histidine 200. A divalent metal cation is bound by residues aspartate 220, aspartate 231, and histidine 300. Residue histidine 308 coordinates substrate. A divalent metal cation-binding residues include glutamate 334 and glutamate 429.

It belongs to the peptidase M24A family. Methionine aminopeptidase eukaryotic type 2 subfamily. Requires Co(2+) as cofactor. The cofactor is Zn(2+). Mn(2+) serves as cofactor. Fe(2+) is required as a cofactor.

Its subcellular location is the cytoplasm. The enzyme catalyses Release of N-terminal amino acids, preferentially methionine, from peptides and arylamides.. Its function is as follows. Cotranslationally removes the N-terminal methionine from nascent proteins. The N-terminal methionine is often cleaved when the second residue in the primary sequence is small and uncharged (Met-Ala-, Cys, Gly, Pro, Ser, Thr, or Val). This Malassezia globosa (strain ATCC MYA-4612 / CBS 7966) (Dandruff-associated fungus) protein is Methionine aminopeptidase 2.